The sequence spans 404 residues: tRNA pseudouridine(31) synthase (404 aa).

Residue aspartate 168 is part of the active site.

The protein belongs to the pseudouridine synthase RluA family.

It is found in the cytoplasm. The protein resides in the mitochondrion. It carries out the reaction uridine(31) in tRNA = pseudouridine(31) in tRNA. Its function is as follows. Catalyzes the formation of pseudouridine at position 31 in the psi GC loop of tRNAS. The chain is tRNA pseudouridine(31) synthase (PUS6) from Saccharomyces cerevisiae (strain ATCC 204508 / S288c) (Baker's yeast).